The chain runs to 846 residues: FNIP repeat-containing protein DDB_G0289381 (846 aa).

A compositionally biased stretch (basic residues) spans Met1–Ser11. Residues Met1–Asp39 are disordered. Residues Asp20–Lys33 are compositionally biased toward basic and acidic residues. 4 FNIP repeats span residues Ile159–Lys193, Phe194–Asn239, Phe240–Asn283, and Phe284–Asp325. The disordered stretch occupies residues Ser362–Thr384. FNIP repeat units lie at residues Phe458–Gly500, Phe501–Ser546, and Phe654–Lys693. Residues Ser702–Ser734 form a disordered region. Residues Ser702–Ser734 are a coiled coil.

The chain is FNIP repeat-containing protein DDB_G0289381 from Dictyostelium discoideum (Social amoeba).